A 375-amino-acid polypeptide reads, in one-letter code: Trichodiene synthase (375 aa).

Belongs to the trichodiene synthase family.

The enzyme catalyses (2E,6E)-farnesyl diphosphate = trichodiene + diphosphate. The protein operates within sesquiterpene biosynthesis; trichothecene biosynthesis. TS is a member of the terpene cyclase group of enzymes. It catalyzes the isomerization and cyclization of farnesyl pyro-phosphate to form trichodiene, the first cyclic intermediate in the biosynthetic pathway for trichothecenes. It serves to branch trichothecene biosynthesis from the isoprenoid pathway. The protein is Trichodiene synthase (TRI5) of Fusarium austroamericanum.